The following is a 483-amino-acid chain: 6-phosphogluconate dehydrogenase, decarboxylating (483 aa).

Residues 10 to 15 (GLAVMG) and 33 to 35 (NRT) contribute to the NADP(+) site. Position 38 is an N6-acetyllysine (K38). At S57 the chain carries Phosphoserine. K59 carries the post-translational modification N6-acetyllysine. Residues 75–77 (VKA) and N103 contribute to the NADP(+) site. Residues N103 and 129-131 (SGG) contribute to the substrate site. A Phosphoserine modification is found at S129. K184 acts as the Proton acceptor in catalysis. A substrate-binding site is contributed by 187–188 (HN). Residue E191 is the Proton donor of the active site. Residues Y192, K261, R288, R447, and H453 each contribute to the substrate site. 478–481 (SSSY) lines the NADP(+) pocket.

The protein belongs to the 6-phosphogluconate dehydrogenase family. In terms of assembly, homodimer.

Its subcellular location is the cytoplasm. It carries out the reaction 6-phospho-D-gluconate + NADP(+) = D-ribulose 5-phosphate + CO2 + NADPH. The protein operates within carbohydrate degradation; pentose phosphate pathway; D-ribulose 5-phosphate from D-glucose 6-phosphate (oxidative stage): step 3/3. Functionally, catalyzes the oxidative decarboxylation of 6-phosphogluconate to ribulose 5-phosphate and CO(2), with concomitant reduction of NADP to NADPH. In Mus musculus (Mouse), this protein is 6-phosphogluconate dehydrogenase, decarboxylating (Pgd).